Here is a 363-residue protein sequence, read N- to C-terminus: ADP-ribosylhydrolase ARH3 (363 aa).

Glutamate 41 is a Mg(2+) binding site. Threonine 64 is subject to Phosphothreonine. Positions 76, 77, and 78 each coordinate Mg(2+). Aspartate 77 provides a ligand contact to substrate. Substrate contacts are provided by residues 146-152 (KGSYGNG), histidine 182, leucine 235, and isoleucine 271. Residues aspartate 314, aspartate 316, and threonine 317 each contribute to the Mg(2+) site.

This sequence belongs to the ADP-ribosylglycohydrolase family. As to quaternary structure, monomer. Mg(2+) is required as a cofactor. As to expression, ubiquitous. Expressed in skin fibroblasts.

Its subcellular location is the nucleus. It is found in the cytoplasm. The protein localises to the chromosome. The protein resides in the mitochondrion matrix. The catalysed reaction is [(1''-&gt;2')-ADP-alpha-D-ribose](n) + H2O = [(1''-&gt;2')-ADP-alpha-D-ribose](n-1) + ADP-D-ribose. The enzyme catalyses 1''-O-acetyl-ADP-alpha-D-ribose + H2O = ADP-D-ribose + acetate + H(+). It catalyses the reaction O-(ADP-D-ribosyl)-L-seryl-[protein] + H2O = ADP-D-ribose + L-seryl-[protein]. It carries out the reaction alpha-NAD(+) + H2O = ADP-D-ribose + nicotinamide + H(+). The protein undergoes a dramatic conformational switch from closed to open states upon substrate-binding, which enables specific substrate recognition for the 1''-O-linkage. The glutamate flap (Glu-41) blocks substrate entrance to Mg(2+) in the unliganded closed state. In presence of substrate, Glu-41 is ejected from the active site: this closed-to-open transition significantly widens the substrate-binding channel and precisely positions the scissile 1''-O-linkage for cleavage while securing tightly 2'- and 3'-hydroxyls of ADP-ribose. In terms of biological role, ADP-ribosylhydrolase that preferentially hydrolyzes the scissile alpha-O-linkage attached to the anomeric C1'' position of ADP-ribose and acts on different substrates, such as proteins ADP-ribosylated on serine and threonine, free poly(ADP-ribose) and O-acetyl-ADP-D-ribose. Specifically acts as a serine mono-ADP-ribosylhydrolase by mediating the removal of mono-ADP-ribose attached to serine residues on proteins, thereby playing a key role in DNA damage response. Serine ADP-ribosylation of proteins constitutes the primary form of ADP-ribosylation of proteins in response to DNA damage. Does not hydrolyze ADP-ribosyl-arginine, -cysteine, -diphthamide, or -asparagine bonds. Also able to degrade protein free poly(ADP-ribose), which is synthesized in response to DNA damage: free poly(ADP-ribose) acts as a potent cell death signal and its degradation by ADPRHL2 protects cells from poly(ADP-ribose)-dependent cell death, a process named parthanatos. Also hydrolyzes free poly(ADP-ribose) in mitochondria. Specifically digests O-acetyl-ADP-D-ribose, a product of deacetylation reactions catalyzed by sirtuins. Specifically degrades 1''-O-acetyl-ADP-D-ribose isomer, rather than 2''-O-acetyl-ADP-D-ribose or 3''-O-acetyl-ADP-D-ribose isomers. The sequence is that of ADP-ribosylhydrolase ARH3 from Homo sapiens (Human).